Reading from the N-terminus, the 150-residue chain is MAIRVQQAAFDPGQELNALHAQNVGIGAVVGFVGYVRDFNDGREVGGMFLEHYPGMTEKALGKIAAEAGQRWPLLRLEILHRIGRLEPGEPIVFVGCASAHRQAAFDACNFVMDYLKTRAPFWKKEDTAEGPRWVEGRCSDQAAAQRWEE.

Substrate is bound by residues 35–37, 101–102, K117, and 124–126; these read YVR, HR, and KKE.

Belongs to the MoaE family. Heterotetramer of 2 MoaD subunits and 2 MoaE subunits. Also stable as homodimer. The enzyme changes between these two forms during catalysis.

The catalysed reaction is 2 [molybdopterin-synthase sulfur-carrier protein]-C-terminal-Gly-aminoethanethioate + cyclic pyranopterin phosphate + H2O = molybdopterin + 2 [molybdopterin-synthase sulfur-carrier protein]-C-terminal Gly-Gly + 2 H(+). It functions in the pathway cofactor biosynthesis; molybdopterin biosynthesis. Functionally, converts molybdopterin precursor Z into molybdopterin. This requires the incorporation of two sulfur atoms into precursor Z to generate a dithiolene group. The sulfur is provided by MoaD. In Pseudomonas aeruginosa (strain ATCC 15692 / DSM 22644 / CIP 104116 / JCM 14847 / LMG 12228 / 1C / PRS 101 / PAO1), this protein is Molybdopterin synthase catalytic subunit (moaE).